The following is a 771-amino-acid chain: Probable dipeptidyl peptidase 4 (771 aa).

An N-terminal signal peptide occupies residues 1-16 (MKYSKLLLLLVSVVQA). N-linked (GlcNAc...) asparagine glycans are attached at residues Asn37, Asn80, Asn114, Asn173, Asn222, Asn470, and Asn495. Residues Ser618, Asp695, and His730 each act as charge relay system in the active site.

This sequence belongs to the peptidase S9B family.

The protein resides in the secreted. It catalyses the reaction Release of an N-terminal dipeptide, Xaa-Yaa-|-Zaa-, from a polypeptide, preferentially when Yaa is Pro, provided Zaa is neither Pro nor hydroxyproline.. Extracellular dipeptidyl-peptidase which removes N-terminal dipeptides sequentially from polypeptides having unsubstituted N-termini provided that the penultimate residue is proline. This is Probable dipeptidyl peptidase 4 (dpp4) from Aspergillus flavus (strain ATCC 200026 / FGSC A1120 / IAM 13836 / NRRL 3357 / JCM 12722 / SRRC 167).